The sequence spans 95 residues: TBK1 inhibitor DP96R (95 aa).

This sequence belongs to the asfivirus DP96R family.

Inhibits cGAS-STING-mediated type I IFN expression and NF-kB activation by inhibiting TBK1 and IKBKB/IKKB. Inhibits host TBK1 phosphorylation. The protein is TBK1 inhibitor DP96R of Ornithodoros (relapsing fever ticks).